The primary structure comprises 365 residues: uncharacterized protein (365 aa).

This is an uncharacterized protein from Archaeoglobus fulgidus (strain ATCC 49558 / DSM 4304 / JCM 9628 / NBRC 100126 / VC-16).